Reading from the N-terminus, the 204-residue chain is Elongation factor Ts (204 aa).

Positions 80 to 83 are involved in Mg(2+) ion dislocation from EF-Tu; that stretch reads TDFV.

It belongs to the EF-Ts family.

The protein resides in the cytoplasm. In terms of biological role, associates with the EF-Tu.GDP complex and induces the exchange of GDP to GTP. It remains bound to the aminoacyl-tRNA.EF-Tu.GTP complex up to the GTP hydrolysis stage on the ribosome. The sequence is that of Elongation factor Ts from Caldicellulosiruptor saccharolyticus (strain ATCC 43494 / DSM 8903 / Tp8T 6331).